A 306-amino-acid chain; its full sequence is NAD kinase 1 (306 aa).

Catalysis depends on aspartate 67, which acts as the Proton acceptor. NAD(+) contacts are provided by residues 67 to 68 (DG), 149 to 150 (NE), and aspartate 181.

This sequence belongs to the NAD kinase family. The cofactor is a divalent metal cation.

It is found in the cytoplasm. It catalyses the reaction NAD(+) + ATP = ADP + NADP(+) + H(+). Functionally, involved in the regulation of the intracellular balance of NAD and NADP, and is a key enzyme in the biosynthesis of NADP. Catalyzes specifically the phosphorylation on 2'-hydroxyl of the adenosine moiety of NAD to yield NADP. The sequence is that of NAD kinase 1 from Thermosynechococcus vestitus (strain NIES-2133 / IAM M-273 / BP-1).